We begin with the raw amino-acid sequence, 206 residues long: Ribonuclease HII (206 aa).

An RNase H type-2 domain is found at 14 to 206 (ALVCGIDEAG…FRLRQLGEKP (193 aa)). The a divalent metal cation site is built by aspartate 20, glutamate 21, and aspartate 117.

The protein belongs to the RNase HII family. Requires Mn(2+) as cofactor. The cofactor is Mg(2+).

Its subcellular location is the cytoplasm. It catalyses the reaction Endonucleolytic cleavage to 5'-phosphomonoester.. Functionally, endonuclease that specifically degrades the RNA of RNA-DNA hybrids. The sequence is that of Ribonuclease HII from Pelodictyon phaeoclathratiforme (strain DSM 5477 / BU-1).